The sequence spans 158 residues: Ribosome maturation factor RimP (158 aa).

It belongs to the RimP family.

The protein resides in the cytoplasm. Functionally, required for maturation of 30S ribosomal subunits. The chain is Ribosome maturation factor RimP from Deinococcus radiodurans (strain ATCC 13939 / DSM 20539 / JCM 16871 / CCUG 27074 / LMG 4051 / NBRC 15346 / NCIMB 9279 / VKM B-1422 / R1).